The chain runs to 282 residues: Pantothenate synthetase (282 aa).

ATP is bound at residue 30–37 (MGFLHDGH). His37 functions as the Proton donor in the catalytic mechanism. Gln60 is a binding site for (R)-pantoate. Gln60 contacts beta-alanine. Residue 146–149 (GQKD) participates in ATP binding. Gln152 contributes to the (R)-pantoate binding site. ATP-binding positions include Ile175 and 183-186 (KSSR).

This sequence belongs to the pantothenate synthetase family. As to quaternary structure, homodimer.

Its subcellular location is the cytoplasm. It carries out the reaction (R)-pantoate + beta-alanine + ATP = (R)-pantothenate + AMP + diphosphate + H(+). The protein operates within cofactor biosynthesis; (R)-pantothenate biosynthesis; (R)-pantothenate from (R)-pantoate and beta-alanine: step 1/1. Catalyzes the condensation of pantoate with beta-alanine in an ATP-dependent reaction via a pantoyl-adenylate intermediate. The protein is Pantothenate synthetase of Campylobacter jejuni subsp. jejuni serotype O:23/36 (strain 81-176).